The sequence spans 152 residues: Snaclec 5 (152 aa).

The N-terminal stretch at 1 to 23 is a signal peptide; the sequence is MGRFIFLSSGLLVVFLSLSGTGA. 3 cysteine pairs are disulfide-bonded: Cys27/Cys38, Cys55/Cys148, and Cys123/Cys140. The C-type lectin domain maps to 34–149; the sequence is YGQHCYRAFK…CASHNPFVCK (116 aa).

The protein belongs to the snaclec family. As to quaternary structure, heterodimer; disulfide-linked. As to expression, expressed by the venom gland.

It localises to the secreted. Interferes with one step of hemostasis (modulation of platelet aggregation, or coagulation cascade, for example). The polypeptide is Snaclec 5 (Bitis arietans (African puff adder)).